The sequence spans 445 residues: Tubulin beta chain (445 aa).

The short motif at 1-4 (MREI) is the MREI motif element. Q11 is a binding site for GTP. S40 is subject to Phosphoserine. Residue K58 is modified to N6-acetyllysine; alternate. K58 bears the N6-succinyllysine; alternate mark. K58 is covalently cross-linked (Glycyl lysine isopeptide (Lys-Gly) (interchain with G-Cter in ubiquitin); alternate). Residues E69, S138, G142, T143, and G144 each coordinate GTP. E69 is a Mg(2+) binding site. The residue at position 172 (S172) is a Phosphoserine; by CDK1. The GTP site is built by N204 and N226. T285 and T290 each carry phosphothreonine. Omega-N-methylarginine is present on R318. K324 is covalently cross-linked (Glycyl lysine isopeptide (Lys-Gly) (interchain with G-Cter in ubiquitin)). The disordered stretch occupies residues 424–445 (QYQDATADEQGEFEEEGEEDEA). Residues 429 to 445 (TADEQGEFEEEGEEDEA) show a composition bias toward acidic residues. At E438 the chain carries 5-glutamyl polyglutamate.

It belongs to the tubulin family. In terms of assembly, dimer of alpha and beta chains. A typical microtubule is a hollow water-filled tube with an outer diameter of 25 nm and an inner diameter of 15 nM. Alpha-beta heterodimers associate head-to-tail to form protofilaments running lengthwise along the microtubule wall with the beta-tubulin subunit facing the microtubule plus end conferring a structural polarity. Microtubules usually have 13 protofilaments but different protofilament numbers can be found in some organisms and specialized cells. Interacts with NCKAP5L. Mg(2+) is required as a cofactor. In terms of processing, some glutamate residues at the C-terminus are polyglycylated, resulting in polyglycine chains on the gamma-carboxyl group. Glycylation is mainly limited to tubulin incorporated into axonemes (cilia and flagella) whereas glutamylation is prevalent in neuronal cells, centrioles, axonemes, and the mitotic spindle. Both modifications can coexist on the same protein on adjacent residues, and lowering polyglycylation levels increases polyglutamylation, and reciprocally. Cilia and flagella glycylation is required for their stability and maintenance. Flagella glycylation controls sperm motility. Some glutamate residues at the C-terminus are polyglutamylated, resulting in polyglutamate chains on the gamma-carboxyl group. Polyglutamylation plays a key role in microtubule severing by spastin (SPAST). SPAST preferentially recognizes and acts on microtubules decorated with short polyglutamate tails: severing activity by SPAST increases as the number of glutamates per tubulin rises from one to eight, but decreases beyond this glutamylation threshold. Post-translationally, phosphorylated on Ser-172 by CDK1 during the cell cycle, from metaphase to telophase, but not in interphase. This phosphorylation inhibits tubulin incorporation into microtubules.

The protein localises to the cytoplasm. Its subcellular location is the cytoskeleton. In terms of biological role, tubulin is the major constituent of microtubules, a cylinder consisting of laterally associated linear protofilaments composed of alpha- and beta-tubulin heterodimers. Microtubules grow by the addition of GTP-tubulin dimers to the microtubule end, where a stabilizing cap forms. Below the cap, tubulin dimers are in GDP-bound state, owing to GTPase activity of alpha-tubulin. The protein is Tubulin beta chain of Sus scrofa (Pig).